A 171-amino-acid polypeptide reads, in one-letter code: 3-hydroxydecanoyl-[acyl-carrier-protein] dehydratase (171 aa).

Residue His-70 is part of the active site.

It belongs to the thioester dehydratase family. FabA subfamily. In terms of assembly, homodimer.

It localises to the cytoplasm. It carries out the reaction a (3R)-hydroxyacyl-[ACP] = a (2E)-enoyl-[ACP] + H2O. It catalyses the reaction (3R)-hydroxydecanoyl-[ACP] = (2E)-decenoyl-[ACP] + H2O. The catalysed reaction is (2E)-decenoyl-[ACP] = (3Z)-decenoyl-[ACP]. The protein operates within lipid metabolism; fatty acid biosynthesis. Its function is as follows. Necessary for the introduction of cis unsaturation into fatty acids. Catalyzes the dehydration of (3R)-3-hydroxydecanoyl-ACP to E-(2)-decenoyl-ACP and then its isomerization to Z-(3)-decenoyl-ACP. Can catalyze the dehydratase reaction for beta-hydroxyacyl-ACPs with saturated chain lengths up to 16:0, being most active on intermediate chain length. This is 3-hydroxydecanoyl-[acyl-carrier-protein] dehydratase from Vibrio campbellii (strain ATCC BAA-1116).